The primary structure comprises 353 residues: DNA polymerase IV (353 aa).

Residues 6–187 (IIHIDCDCFY…LPVTKLHGVG (182 aa)) enclose the UmuC domain. Asp10 and Asp105 together coordinate Mg(2+). Residue Glu106 is part of the active site.

The protein belongs to the DNA polymerase type-Y family. Monomer. It depends on Mg(2+) as a cofactor.

Its subcellular location is the cytoplasm. The enzyme catalyses DNA(n) + a 2'-deoxyribonucleoside 5'-triphosphate = DNA(n+1) + diphosphate. Poorly processive, error-prone DNA polymerase involved in untargeted mutagenesis. Copies undamaged DNA at stalled replication forks, which arise in vivo from mismatched or misaligned primer ends. These misaligned primers can be extended by PolIV. Exhibits no 3'-5' exonuclease (proofreading) activity. May be involved in translesional synthesis, in conjunction with the beta clamp from PolIII. This is DNA polymerase IV from Pseudomonas syringae pv. tomato (strain ATCC BAA-871 / DC3000).